Reading from the N-terminus, the 326-residue chain is D-allose transport system permease protein AlsC (326 aa).

At 1 to 18 the chain is on the cytoplasmic side; the sequence is MGFTTRVKSEASEKKPFN. Residues 19–39 form a helical membrane-spanning segment; that stretch reads FALFWDKYGTFFILAIIVAIF. The Periplasmic portion of the chain corresponds to 40 to 70; sequence GSLSPEYFLTTNNITQIFVQSSVTVLIGMGE. Residues 71-91 traverse the membrane as a helical segment; sequence FFAILVAGIDLSVGAILALSG. At 92 to 101 the chain is on the cytoplasmic side; it reads MVTAKLMLAG. The chain crosses the membrane as a helical span at residues 102 to 122; the sequence is VDPFLAAMIGGVLVGGALGAI. The Periplasmic portion of the chain corresponds to 123–124; sequence NG. A helical membrane pass occupies residues 125–145; the sequence is CLVNWTGLHPFIITLGTNAIF. Residues 146–149 lie on the Cytoplasmic side of the membrane; the sequence is RGIT. The chain crosses the membrane as a helical span at residues 150–170; the sequence is LVISDANSVYGFSFDFVNFFA. Topologically, residues 171-172 are periplasmic; that stretch reads AS. A helical transmembrane segment spans residues 173-193; that stretch reads VIGIPVPVIFSLIVALILWFL. Topologically, residues 194 to 221 are cytoplasmic; sequence TTRMRLGRNIYALGGNKNSAFYSGIDVK. The chain crosses the membrane as a helical span at residues 222 to 242; sequence FHILVVFIISGVCAGLAGVVS. The Periplasmic segment spans residues 243–252; sequence TARLGAAEPL. Residues 253 to 273 traverse the membrane as a helical segment; sequence AGMGFETYAIASAIIGGTSFF. Residues 274–278 lie on the Cytoplasmic side of the membrane; it reads GGKGR. A run of 2 helical transmembrane segments spans residues 279–299 and 300–320; these read IFSV…LNIL and QVQT…AVAL. Residues 321-326 are Cytoplasmic-facing; that stretch reads DRLISK.

Belongs to the binding-protein-dependent transport system permease family. AraH/RbsC subfamily.

The protein localises to the cell inner membrane. Its function is as follows. Part of the binding-protein-dependent transport system AlsBAC for D-allose; probably responsible for the translocation of the substrate across the membrane. This chain is D-allose transport system permease protein AlsC (alsC), found in Escherichia coli (strain K12).